Here is a 288-residue protein sequence, read N- to C-terminus: Mortality factor 4-like protein 2 (288 aa).

Polar residues predominate over residues 1-15; it reads MSSRKQASQTRGQQS. A disordered region spans residues 1 to 115; that stretch reads MSSRKQASQT…DPTVESEEAF (115 aa). Ser-71 bears the Phosphoserine mark. Residues 117–288 form the MRG domain; that stretch reads SRMEVKVKIP…ASADYHRKAL (172 aa).

Component of the NuA4 histone acetyltransferase complex which contains the catalytic subunit KAT5/TIP60 and the subunits EP400, TRRAP/PAF400, BRD8/SMAP, EPC1, DMAP1/DNMAP1, RUVBL1/TIP49, RUVBL2, ING3, actin, ACTL6A/BAF53A, MORF4L1/MRG15, MORF4L2/MRGX, MRGBP, YEATS4/GAS41 and VPS72/YL1. The NuA4 complex interacts with MYC and the adenovirus E1A protein. MORF4L1 may also participate in the formation of NuA4 related complexes which lack the KAT5/TIP60 catalytic subunit, but which include the SWI/SNF related protein SRCAP. Component of the MSIN3A histone deacetylase complex, which includes SIN3A, HDAC2, ARID4B, MORF4L1, RBBP4/RbAp48, and RBBP7/RbAp46. Interacts with MRFAP1 and RB1. May also interact with one or more as yet undefined members of the TLE (transducin-like enhancer of split) family of transcriptional repressors.

The protein localises to the nucleus. Component of the NuA4 histone acetyltransferase complex which is involved in transcriptional activation of select genes principally by acetylation of nucleosomal histone H4 and H2A. This modification may both alter nucleosome - DNA interactions and promote interaction of the modified histones with other proteins which positively regulate transcription. This complex may be required for the activation of transcriptional programs associated with oncogene and proto-oncogene mediated growth induction, tumor suppressor mediated growth arrest and replicative senescence, apoptosis, and DNA repair. The NuA4 complex ATPase and helicase activities seem to be, at least in part, contributed by the association of RUVBL1 and RUVBL2 with EP400. NuA4 may also play a direct role in DNA repair when directly recruited to sites of DNA damage. Also a component of the MSIN3A complex which acts to repress transcription by deacetylation of nucleosomal histones. This is Mortality factor 4-like protein 2 (Morf4l2) from Mus musculus (Mouse).